Reading from the N-terminus, the 369-residue chain is S-(hydroxymethyl)glutathione dehydrogenase (369 aa).

7 residues coordinate Zn(2+): cysteine 40, histidine 62, cysteine 92, cysteine 95, cysteine 98, cysteine 106, and cysteine 169.

Belongs to the zinc-containing alcohol dehydrogenase family. Class-III subfamily. As to quaternary structure, homodimer. Zn(2+) serves as cofactor.

Its subcellular location is the cytoplasm. The enzyme catalyses S-(hydroxymethyl)glutathione + NADP(+) = S-formylglutathione + NADPH + H(+). The catalysed reaction is S-(hydroxymethyl)glutathione + NAD(+) = S-formylglutathione + NADH + H(+). It carries out the reaction a primary alcohol + NAD(+) = an aldehyde + NADH + H(+). It catalyses the reaction a secondary alcohol + NAD(+) = a ketone + NADH + H(+). The enzyme catalyses S-nitrosoglutathione + NADH + H(+) = S-(hydroxysulfenamide)glutathione + NAD(+). Has high formaldehyde dehydrogenase activity in the presence of glutathione and catalyzes the oxidation of normal alcohols in a reaction that is not GSH-dependent. In addition, hemithiolacetals other than those formed from GSH, including omega-thiol fatty acids, also are substrates. Also acts as a S-nitroso-glutathione reductase by catalyzing the NADH-dependent reduction of S-nitrosoglutathione. In Escherichia coli (strain ATCC 8739 / DSM 1576 / NBRC 3972 / NCIMB 8545 / WDCM 00012 / Crooks), this protein is S-(hydroxymethyl)glutathione dehydrogenase (frmA).